Consider the following 88-residue polypeptide: ATP synthase subunit 9, mitochondrial (88 aa).

A run of 2 helical transmembrane segments spans residues 8–28 (IGAG…GNVF) and 45–72 (LFGY…LILF).

It belongs to the ATPase C chain family. As to quaternary structure, F-type ATPases have 2 components, CF(1) - the catalytic core - and CF(0) - the membrane proton channel. CF(1) has five subunits: alpha(3), beta(3), gamma(1), delta(1), epsilon(1). CF(0) has three main subunits: a, b and c.

Its subcellular location is the mitochondrion membrane. The catalysed reaction is ATP + H2O + 4 H(+)(in) = ADP + phosphate + 5 H(+)(out). Functionally, this protein is one of the chains of the nonenzymatic membrane component (F0) of mitochondrial ATPase. This chain is ATP synthase subunit 9, mitochondrial (ATP9), found in Beta vulgaris (Sugar beet).